The primary structure comprises 441 residues: Proline--tRNA ligase (441 aa).

Belongs to the class-II aminoacyl-tRNA synthetase family. ProS type 2 subfamily. Homodimer.

The protein localises to the cytoplasm. The catalysed reaction is tRNA(Pro) + L-proline + ATP = L-prolyl-tRNA(Pro) + AMP + diphosphate. Catalyzes the attachment of proline to tRNA(Pro) in a two-step reaction: proline is first activated by ATP to form Pro-AMP and then transferred to the acceptor end of tRNA(Pro). In Bartonella bacilliformis (strain ATCC 35685 / KC583 / Herrer 020/F12,63), this protein is Proline--tRNA ligase.